Consider the following 244-residue polypeptide: LexA repressor (244 aa).

The tract at residues 1 to 24 (MSDSSDTTVDGASDGASDGASGAD) is disordered. Residues 10-24 (DGASDGASDGASGAD) show a composition bias toward low complexity. The segment at residues 58-78 (IREIGDAVGLTSTSSVAHQLR) is a DNA-binding region (H-T-H motif). Catalysis depends on for autocatalytic cleavage activity residues S168 and K205.

It belongs to the peptidase S24 family. In terms of assembly, homodimer.

It catalyses the reaction Hydrolysis of Ala-|-Gly bond in repressor LexA.. In terms of biological role, represses a number of genes involved in the response to DNA damage (SOS response), including recA and lexA. In the presence of single-stranded DNA, RecA interacts with LexA causing an autocatalytic cleavage which disrupts the DNA-binding part of LexA, leading to derepression of the SOS regulon and eventually DNA repair. This Mycobacterium ulcerans (strain Agy99) protein is LexA repressor.